The sequence spans 1180 residues: Pyruvate carboxylase 2 (1180 aa).

S2 carries the N-acetylserine modification. A Biotin carboxylation domain is found at 19 to 471 (EKNKILVANR…WTTFIDDTPQ (453 aa)). The ATP site is built by K137, E221, and H256. The ATP-grasp domain maps to 141-338 (RHLAARANVP…IVSAQIQIAA (198 aa)). R313 is an active-site residue. The Pyruvate carboxyltransferase domain maps to 558-825 (TLLMDTTWRD…DTGINVEHVR (268 aa)). Residues 566–570 (RDAHQ) and R639 contribute to the substrate site. D567 provides a ligand contact to a divalent metal cation. 3 residues coordinate a divalent metal cation: K735, H765, and H767. K735 is modified (N6-carboxylysine). A substrate-binding site is contributed by T899. The region spanning 1095-1170 (KADVHDTHQI…DASDLLVVLE (76 aa)) is the Biotinyl-binding domain. K1136 carries the N6-biotinyllysine modification.

As to quaternary structure, homotetramer. The cofactor is biotin. It depends on Zn(2+) as a cofactor.

Its subcellular location is the cytoplasm. It carries out the reaction hydrogencarbonate + pyruvate + ATP = oxaloacetate + ADP + phosphate + H(+). The protein operates within carbohydrate biosynthesis; gluconeogenesis. In terms of biological role, pyruvate carboxylase catalyzes a 2-step reaction, involving the ATP-dependent carboxylation of the covalently attached biotin in the first step and the transfer of the carboxyl group to pyruvate in the second. This Saccharomyces cerevisiae (strain ATCC 204508 / S288c) (Baker's yeast) protein is Pyruvate carboxylase 2 (PYC2).